The primary structure comprises 601 residues: Elongation factor 4 (601 aa).

The tr-type G domain maps to 6-188 (DHIRNFSIVA…AIVHQLPPPR (183 aa)). Residues 18–23 (DHGKST) and 135–138 (NKVD) contribute to the GTP site.

Belongs to the TRAFAC class translation factor GTPase superfamily. Classic translation factor GTPase family. LepA subfamily.

Its subcellular location is the cell inner membrane. It carries out the reaction GTP + H2O = GDP + phosphate + H(+). Functionally, required for accurate and efficient protein synthesis under certain stress conditions. May act as a fidelity factor of the translation reaction, by catalyzing a one-codon backward translocation of tRNAs on improperly translocated ribosomes. Back-translocation proceeds from a post-translocation (POST) complex to a pre-translocation (PRE) complex, thus giving elongation factor G a second chance to translocate the tRNAs correctly. Binds to ribosomes in a GTP-dependent manner. This Mesorhizobium japonicum (strain LMG 29417 / CECT 9101 / MAFF 303099) (Mesorhizobium loti (strain MAFF 303099)) protein is Elongation factor 4.